Reading from the N-terminus, the 595-residue chain is NADH-quinone oxidoreductase subunit C/D (595 aa).

The NADH dehydrogenase I subunit C stretch occupies residues 1–186 (MAETDIAMPE…TPYMQDKAKQ (186 aa)). Residues 210-595 (DFMFLNLGPN…IDVVMADVDR (386 aa)) are NADH dehydrogenase I subunit D.

The protein in the N-terminal section; belongs to the complex I 30 kDa subunit family. In the C-terminal section; belongs to the complex I 49 kDa subunit family. In terms of assembly, NDH-1 is composed of 13 different subunits. Subunits NuoB, CD, E, F, and G constitute the peripheral sector of the complex.

It localises to the cell inner membrane. It catalyses the reaction a quinone + NADH + 5 H(+)(in) = a quinol + NAD(+) + 4 H(+)(out). NDH-1 shuttles electrons from NADH, via FMN and iron-sulfur (Fe-S) centers, to quinones in the respiratory chain. The immediate electron acceptor for the enzyme in this species is believed to be ubiquinone. Couples the redox reaction to proton translocation (for every two electrons transferred, four hydrogen ions are translocated across the cytoplasmic membrane), and thus conserves the redox energy in a proton gradient. The chain is NADH-quinone oxidoreductase subunit C/D from Acinetobacter baumannii (strain AYE).